We begin with the raw amino-acid sequence, 156 residues long: Ribosomal RNA large subunit methyltransferase H (156 aa).

S-adenosyl-L-methionine-binding positions include Leu73, Gly104, and 123–128 (IGPLTL).

It belongs to the RNA methyltransferase RlmH family. As to quaternary structure, homodimer.

The protein resides in the cytoplasm. The enzyme catalyses pseudouridine(1915) in 23S rRNA + S-adenosyl-L-methionine = N(3)-methylpseudouridine(1915) in 23S rRNA + S-adenosyl-L-homocysteine + H(+). Specifically methylates the pseudouridine at position 1915 (m3Psi1915) in 23S rRNA. In Xanthomonas axonopodis pv. citri (strain 306), this protein is Ribosomal RNA large subunit methyltransferase H.